A 330-amino-acid polypeptide reads, in one-letter code: Phenylalanine--tRNA ligase alpha subunit (330 aa).

Glutamate 246 serves as a coordination point for Mg(2+).

This sequence belongs to the class-II aminoacyl-tRNA synthetase family. Phe-tRNA synthetase alpha subunit type 1 subfamily. Tetramer of two alpha and two beta subunits. Requires Mg(2+) as cofactor.

It localises to the cytoplasm. The enzyme catalyses tRNA(Phe) + L-phenylalanine + ATP = L-phenylalanyl-tRNA(Phe) + AMP + diphosphate + H(+). The protein is Phenylalanine--tRNA ligase alpha subunit of Campylobacter jejuni subsp. doylei (strain ATCC BAA-1458 / RM4099 / 269.97).